Reading from the N-terminus, the 418-residue chain is Sprouty-related, EVH1 domain-containing protein 2 (418 aa).

The WH1 domain maps to 5–122 (THPDDDSYIV…RGVRKAIEDL (118 aa)). The interval 127–171 (TTSSSTIHNEAELGDDDVFTTATDSSSNSSQKREQPTRTISSPTS) is disordered. Residues 146–156 (TTATDSSSNSS) are compositionally biased toward polar residues. In terms of domain architecture, KBD spans 201–257 (PYRQVSFPDDDEEIVRINPREKIWMTGYEDYRHAPVRGKYPDPSEDADSSYVRFAKG). Ser206 is subject to Phosphoserine. Phosphotyrosine occurs at positions 228 and 231. Residues 275–302 (GLGEDPKGRGGSVIKTQPSRGKSRRRKE) form a disordered region. The 109-residue stretch at 308–416 (RCVYCRDMFN…CRCCGGKHKA (109 aa)) folds into the SPR domain.

In terms of assembly, homodimer and heterodimer. Able to interact with SPRED1 to form heterodimers. Interacts with RAS. May interact with ZDHHC13 (via ANK repeats) and ZDHHC17 (via ANK repeats). Interacts with TESK1. Interacts with NF1. Post-translationally, phosphorylated on serine and threonine residues. Phosphorylated on tyrosine. Phosphorylation of Tyr-228 and Tyr-231 are required for ubiquitination. In terms of processing, ubiquitinated; leading to degradation by the proteasome. As to expression, expressed in liver, skin, small intestine, salivary gland and prostate.

It is found in the cell membrane. The protein localises to the cytoplasmic vesicle. It localises to the secretory vesicle membrane. Its subcellular location is the cytoplasm. Its function is as follows. Negatively regulates Ras signaling pathways and downstream activation of MAP kinases. Recruits and translocates NF1 to the cell membrane, thereby enabling NF1-dependent hydrolysis of active GTP-bound Ras to inactive GDP-bound Ras. Inhibits fibroblast growth factor (FGF)-induced retinal lens fiber differentiation, probably by inhibiting FGF-mediated phosphorylation of ERK1/2. Inhibits TGFB-induced epithelial-to-mesenchymal transition in lens epithelial cells. This chain is Sprouty-related, EVH1 domain-containing protein 2 (SPRED2), found in Homo sapiens (Human).